A 291-amino-acid chain; its full sequence is Ribosomal large subunit pseudouridine synthase B (291 aa).

An S4 RNA-binding domain is found at 3 to 75 (EKLQKVLARA…ICRVLAYYKP (73 aa)). The active-site Nucleophile is the aspartate 110. The disordered stretch occupies residues 256-291 (VEKDRRRMKANQIRRAVKRHSQVSGGRRSGGRNNNG).

Belongs to the pseudouridine synthase RsuA family.

The enzyme catalyses uridine(2605) in 23S rRNA = pseudouridine(2605) in 23S rRNA. Its function is as follows. Responsible for synthesis of pseudouridine from uracil-2605 in 23S ribosomal RNA. The polypeptide is Ribosomal large subunit pseudouridine synthase B (rluB) (Escherichia coli O6:H1 (strain CFT073 / ATCC 700928 / UPEC)).